The primary structure comprises 1087 residues: Kinesin-like protein KIN-14F (1087 aa).

One can recognise a Calponin-homology (CH) domain in the interval 1 to 110 (MDQGAMETLP…CILCLKGFYE (110 aa)). The interval 136–155 (SSPPQYGIGSESTTDESVSL) is disordered. The region spanning 377–705 (TIRVYCRVRP…LKFAQRVASI (329 aa)) is the Kinesin motor domain. Residue 461–468 (GQTGSGKT) participates in ATP binding. The stretch at 710-749 (ARSNKETGEIRDLKDEISSLKSAMEKKEAELEQLRSGSIR) forms a coiled coil. Disordered regions lie at residues 740–858 (LEQL…PVSR), 923–949 (QGGVKKTRAESSKAKAKQPSPARFQKL), and 1004–1087 (DSTL…FMVP). 3 stretches are compositionally biased toward polar residues: residues 744–754 (RSGSIRNTTEC), 780–797 (PQPNDGTRSYETRSCSTG), and 836–856 (TDRASTIKSRNKPDVTQNLPV). Polar residues predominate over residues 1017 to 1033 (EPPSKSKNAQRNSSKNS). A compositionally biased stretch (basic and acidic residues) spans 1042 to 1054 (YAHEDTSLVDDKP). Residues 1076–1087 (SRSTHHARFMVP) show a composition bias toward basic residues.

The protein belongs to the TRAFAC class myosin-kinesin ATPase superfamily. Kinesin family. KIN-14 subfamily. Interacts (via C-terminus) with VDAC3. As to expression, expressed in roots, leaves, stems and flowers (at protein level).

The protein resides in the cytoplasm. Its subcellular location is the cytoskeleton. It localises to the mitochondrion. In terms of biological role, required for keeping the ATP levels stable and balancing the aerobic respiration pathways during seed germination at low temperature. The chain is Kinesin-like protein KIN-14F from Arabidopsis thaliana (Mouse-ear cress).